The chain runs to 325 residues: Malate dehydrogenase (325 aa).

Residue 11 to 17 (GAAGQIA) participates in NAD(+) binding. Substrate-binding residues include Arg92 and Arg98. NAD(+) contacts are provided by residues Asn105, Gln112, and 129–131 (VGN). The substrate site is built by Asn131 and Arg162. His187 functions as the Proton acceptor in the catalytic mechanism.

The protein belongs to the LDH/MDH superfamily. MDH type 2 family.

The enzyme catalyses (S)-malate + NAD(+) = oxaloacetate + NADH + H(+). In terms of biological role, catalyzes the reversible oxidation of malate to oxaloacetate. The chain is Malate dehydrogenase from Methylococcus capsulatus (strain ATCC 33009 / NCIMB 11132 / Bath).